Here is a 335-residue protein sequence, read N- to C-terminus: Beta-ketoacyl-[acyl-carrier-protein] synthase III (335 aa).

Residues cysteine 116 and histidine 256 contribute to the active site. Residues 257 to 261 (QANLR) form an ACP-binding region. Asparagine 286 is a catalytic residue.

It belongs to the thiolase-like superfamily. FabH family. As to quaternary structure, homodimer.

The protein resides in the cytoplasm. The enzyme catalyses malonyl-[ACP] + acetyl-CoA + H(+) = 3-oxobutanoyl-[ACP] + CO2 + CoA. Its pathway is lipid metabolism; fatty acid biosynthesis. Functionally, catalyzes the condensation reaction of fatty acid synthesis by the addition to an acyl acceptor of two carbons from malonyl-ACP. Catalyzes the first condensation reaction which initiates fatty acid synthesis and may therefore play a role in governing the total rate of fatty acid production. Possesses both acetoacetyl-ACP synthase and acetyl transacylase activities. Its substrate specificity determines the biosynthesis of branched-chain and/or straight-chain of fatty acids. In Porphyromonas gingivalis (strain ATCC BAA-308 / W83), this protein is Beta-ketoacyl-[acyl-carrier-protein] synthase III.